Here is a 418-residue protein sequence, read N- to C-terminus: Protein fuzzy homolog (418 aa).

It belongs to the fuzzy family. In terms of assembly, component of the CPLANE (ciliogenesis and planar polarity effectors) complex, composed of INTU, FUZ and WDPCP. Interacts with CPLANE2. Interacts with CPLANE1.

It is found in the cytoplasm. The protein localises to the cytoskeleton. Its subcellular location is the cilium basal body. Its function is as follows. Probable planar cell polarity effector involved in cilium biogenesis. May regulate protein and membrane transport to the cilium. Proposed to function as core component of the CPLANE (ciliogenesis and planar polarity effectors) complex involved in the recruitment of peripheral IFT-A proteins to basal bodies. May regulate the morphogenesis of hair follicles which depends on functional primary cilia. Binds phosphatidylinositol 3-phosphate with highest affinity, followed by phosphatidylinositol 4-phosphate and phosphatidylinositol 5-phosphate. The polypeptide is Protein fuzzy homolog (FUZ) (Homo sapiens (Human)).